The primary structure comprises 190 residues: B3 domain-containing protein At4g01580 (190 aa).

The segment at 1 to 25 is disordered; it reads MVITRNMKARATSVSHRQSQQDPES. Over residues 12 to 23 the composition is skewed to polar residues; sequence TSVSHRQSQQDP. The segment at residues 29–122 is a DNA-binding region (TF-B3); sequence KFFKLVLPST…SFRVIIFNAS (94 aa).

It localises to the nucleus. This chain is B3 domain-containing protein At4g01580, found in Arabidopsis thaliana (Mouse-ear cress).